Here is a 616-residue protein sequence, read N- to C-terminus: Putative L-type lectin-domain containing receptor kinase I.10 (616 aa).

Positions 1 to 22 (MAWGLFQILMISFFHLIKLSSQ) are cleaved as a signal peptide. Over 23 to 288 (QETSFVYETF…RAEHKNLSPL (266 aa)) the chain is Extracellular. Residues 24 to 258 (ETSFVYETFR…YQYVLSWSFS (235 aa)) form a legume-lectin like region. Asparagine 56, asparagine 124, asparagine 181, asparagine 204, and asparagine 225 each carry an N-linked (GlcNAc...) asparagine glycan. The helical transmembrane segment at 289–309 (FIDLLGFLAIMGLCTLTGMYF) threads the bilayer. At 310–616 (FKRGKYAEIT…SAASSATNSP (307 aa)) the chain is on the cytoplasmic side. The region spanning 343 to 616 (FHKDGFLGKG…SAASSATNSP (274 aa)) is the Protein kinase domain. ATP contacts are provided by residues 349 to 357 (LGKGGFGEV) and lysine 371. Residue aspartate 467 is the Proton acceptor of the active site.

This sequence in the C-terminal section; belongs to the protein kinase superfamily. Ser/Thr protein kinase family. The protein in the N-terminal section; belongs to the leguminous lectin family.

It localises to the cell membrane. The enzyme catalyses L-seryl-[protein] + ATP = O-phospho-L-seryl-[protein] + ADP + H(+). The catalysed reaction is L-threonyl-[protein] + ATP = O-phospho-L-threonyl-[protein] + ADP + H(+). The sequence is that of Putative L-type lectin-domain containing receptor kinase I.10 (LECRK110) from Arabidopsis thaliana (Mouse-ear cress).